The sequence spans 688 residues: Methionine--tRNA ligase (688 aa).

Residues 15–25 carry the 'HIGH' region motif; sequence PYANGPIHLGH. Zn(2+)-binding residues include Cys-146, Cys-149, Cys-159, and Cys-162. A 'KMSKS' region motif is present at residues 332 to 336; that stretch reads KMSKS. Lys-335 is a binding site for ATP. A disordered region spans residues 552–576; the sequence is AEAPKKADSKKATDTPVDTRPPLES. Basic and acidic residues predominate over residues 554–564; sequence APKKADSKKAT. The 102-residue stretch at 587-688 folds into the tRNA-binding domain; it reads DFAKIDLRIA…EGAQPGMRVK (102 aa).

Belongs to the class-I aminoacyl-tRNA synthetase family. MetG type 1 subfamily. Homodimer. Zn(2+) serves as cofactor.

It localises to the cytoplasm. It carries out the reaction tRNA(Met) + L-methionine + ATP = L-methionyl-tRNA(Met) + AMP + diphosphate. In terms of biological role, is required not only for elongation of protein synthesis but also for the initiation of all mRNA translation through initiator tRNA(fMet) aminoacylation. The protein is Methionine--tRNA ligase of Shewanella woodyi (strain ATCC 51908 / MS32).